We begin with the raw amino-acid sequence, 637 residues long: Biosynthetic arginine decarboxylase (637 aa).

K101 is subject to N6-(pyridoxal phosphate)lysine. Residue 286-296 (VDIGGGLGVDY) coordinates substrate.

The protein belongs to the Orn/Lys/Arg decarboxylase class-II family. SpeA subfamily. The cofactor is Mg(2+). Pyridoxal 5'-phosphate serves as cofactor.

It carries out the reaction L-arginine + H(+) = agmatine + CO2. It functions in the pathway amine and polyamine biosynthesis; agmatine biosynthesis; agmatine from L-arginine: step 1/1. Its function is as follows. Catalyzes the biosynthesis of agmatine from arginine. This Marinobacter nauticus (strain ATCC 700491 / DSM 11845 / VT8) (Marinobacter aquaeolei) protein is Biosynthetic arginine decarboxylase.